Here is a 769-residue protein sequence, read N- to C-terminus: Serine/threonine-protein kinase PLK4 (769 aa).

The 254-residue stretch at 14–267 (YEVQHLLGKG…LEAVLCHPFM (254 aa)) folds into the Protein kinase domain. ATP-binding positions include 20–28 (LGKGGFATV) and Lys43. Residue Asp138 is the Proton acceptor of the active site. One can recognise a Cryptic POLO box 1 (CPB1) domain in the interval 381–498 (EDRISVPPLN…ARFVGLVKSK (118 aa)). Residues 499-602 (TPKVTYFSTL…GRRPITDVQP (104 aa)) enclose the Cryptic POLO box 2 (CPB2) domain. Residues 660-739 (PIKRINVPEI…IPNIQLKLKT (80 aa)) enclose the POLO box domain.

It belongs to the protein kinase superfamily. Ser/Thr protein kinase family. CDC5/Polo subfamily. Homodimer. Interacts with Alms1a. Ubiquitinated by the SCF-slmb ubiquitin ligase complex; leading to its degradation by the proteasome during interphase and regulating centriole number and ensuring the block to centriole reduplication. Expressed in testis (at protein level).

It localises to the cytoplasm. Its subcellular location is the cytoskeleton. The protein resides in the microtubule organizing center. It is found in the centrosome. The protein localises to the centriole. The catalysed reaction is L-seryl-[protein] + ATP = O-phospho-L-seryl-[protein] + ADP + H(+). It carries out the reaction L-threonyl-[protein] + ATP = O-phospho-L-threonyl-[protein] + ADP + H(+). In terms of biological role, serine/threonine-protein kinase that plays a central role in centriole duplication. Able to trigger procentriole formation on the surface of the mother centriole cylinder, using mother centriole as a platform, leading to the recruitment of centriole biogenesis proteins such as Sas-6. When overexpressed, it is able to induce centrosome amplification through the simultaneous generation of multiple procentrioles adjoining each parental centriole during S phase. Centrosome amplification following overexpression can initiate tumorigenesis, highlighting the importance of centrosome regulation in cancers. The sequence is that of Serine/threonine-protein kinase PLK4 (SAK) from Drosophila melanogaster (Fruit fly).